Reading from the N-terminus, the 860-residue chain is Transforming growth factor-beta receptor-associated protein 1 (860 aa).

Residues 24-297 enclose the CNH domain; that stretch reads RVNIECVECC…HILQDFEGRV (274 aa). One copy of the CHCR repeat lies at 564 to 728; it reads RPLDEQQKNS…LLAIYLHAGP (165 aa).

The protein belongs to the TRAP1 family. As to quaternary structure, interacts with TGFBR2 and ACVR2B; in the absence of ligand stimulation. Interacts with TGFBR1, ACVRL1, BMPR1A and ACVR1B; in the absence of ligand stimulation and to a less extent. Interacts with SMAD4; the interaction seems to be mutually exclusive with the interaction of SMAD4 and phosphorylated SMAD2. May interact with ALOX5. Interacts with RAB5C. Interacts with VPS8, VPS11 and VPS16. Component of the putative class C core vacuole/endosome tethering (CORVET) complex; the core of which composed of the class C Vps proteins VPS11, VPS16, VPS18 and VPS33A, is associated with VPS8 and TGFBRAP1.

The protein resides in the cytoplasm. The protein localises to the early endosome. In terms of biological role, plays a role in the TGF-beta/activin signaling pathway. It associates with inactive heteromeric TGF-beta and activin receptor complexes, mainly through the type II receptor, and is released upon activation of signaling. May recruit SMAD4 to the vicinity of the receptor complex and facilitate its interaction with receptor-regulated Smads, such as SMAD2. Plays a role in vesicle-mediated protein trafficking of the endocytic membrane transport pathway. Believed to act as a component of the putative CORVET endosomal tethering complexes which is proposed to be involved in the Rab5-to-Rab7 endosome conversion probably implicating MON1A/B, and via binding SNAREs and SNARE complexes to mediate tethering and docking events during SNARE-mediated membrane fusion. The CORVET complex is proposed to function as a Rab5 effector to mediate early endosome fusion probably in specific endosome subpopulations. Functions predominantly in APPL1-containing endosomes and in degradative but not recycling trafficking of endocytosed cargo. This is Transforming growth factor-beta receptor-associated protein 1 (TGFBRAP1) from Homo sapiens (Human).